A 139-amino-acid chain; its full sequence is Large ribosomal subunit protein uL16 (139 aa).

Residues Met1–Lys11 are compositionally biased toward basic residues. Positions Met1–Phe30 are disordered.

It belongs to the universal ribosomal protein uL16 family. As to quaternary structure, part of the 50S ribosomal subunit.

Binds 23S rRNA and is also seen to make contacts with the A and possibly P site tRNAs. In Mycoplasmopsis synoviae (strain 53) (Mycoplasma synoviae), this protein is Large ribosomal subunit protein uL16.